Here is a 655-residue protein sequence, read N- to C-terminus: p-hydroxybenzoic acid efflux pump subunit AaeB (655 aa).

11 helical membrane-spanning segments follow: residues 13–33, 38–58, 69–89, 93–113, 121–141, 152–172, 370–390, 407–427, 431–451, 459–479, and 482–502; these read FAVKLATAIVLALFVGFHFQL, WAVLTAAIVAAGPAFAAGGEP, LRIIGTFIGCIAGLVIIIAMI, LLMILVCCIWAGFCTWISSLV, WGLAGYTALIIVITIQPEPLL, EIVIGIVCAIMADLLFSPRSI, LFWLWTGWTSGSGAMVMIAVV, FIYGTLAALPLGLLYFLVIIP, QSMLLLCISLAVLGFFLGIEV, MGALASTINIIVLDNPMTFHF, and FLDSALGQIVGCVLAFTVILL.

This sequence belongs to the aromatic acid exporter ArAE (TC 2.A.85) family.

The protein resides in the cell inner membrane. Functionally, forms an efflux pump with AaeA. Could function as a metabolic relief valve, allowing to eliminate certain compounds when they accumulate to high levels in the cell. The protein is p-hydroxybenzoic acid efflux pump subunit AaeB of Shigella boydii serotype 18 (strain CDC 3083-94 / BS512).